We begin with the raw amino-acid sequence, 367 residues long: RYamide receptor (367 aa).

Over 1-35 (MDANTTRNESFSLDCELVNPNSTLANVYFLSAVYS) the chain is Extracellular. N-linked (GlcNAc...) asparagine glycosylation is found at asparagine 4, asparagine 8, and asparagine 21. A helical transmembrane segment spans residues 36–56 (MYAIIFVVALIGNSFVCYIVL). At 57–66 (SSPPMRTVTN) the chain is on the cytoplasmic side. Residues 67–87 (FFILNLAIGDVLITLLCVPFT) form a helical membrane-spanning segment. Topologically, residues 88 to 113 (SVSLLMQYWPFGGILCPVVNYSQALS) are extracellular. The N-linked (GlcNAc...) asparagine glycan is linked to asparagine 107. The helical transmembrane segment at 114–134 (VFVSAYTLVAISIDKYMIIMW) threads the bilayer. At 135-143 (PLKPRISKR) the chain is on the cytoplasmic side. A helical transmembrane segment spans residues 144–164 (FATYIIALVWLIAGITVLPSA). Over 165 to 212 (TFTTLINDENILGTSAYEQCDKYICAEEYSKVGQEYGDLYTKVLMFLQ) the chain is Extracellular. A helical transmembrane segment spans residues 213-233 (YVIPSLVLLFTYTSIGVVIWC). The Cytoplasmic segment spans residues 234–258 (HRIPGEAENSRDQRIAKNKTKMIKM). Residues 259-279 (MVTVVCVYTICWLPYNVLMIF) form a helical membrane-spanning segment. At 280 to 282 (KEH) the chain is on the extracellular side. Residues 283–303 (ISGSVMVYLYFPLHGLAMSHA) form a helical membrane-spanning segment. Topologically, residues 304–367 (CYNPIIYCYM…EITRAQPTSA (64 aa)) are cytoplasmic.

It belongs to the G-protein coupled receptor 1 family.

It is found in the cell membrane. In terms of biological role, receptor for the neuropeptides RYamide-1 and RYamide-2. The activity of this receptor is mediated by G proteins which activate a phosphatidyl-inositol-calcium second messenger system. RYamide-2 is the most potent activator. The chain is RYamide receptor from Tribolium castaneum (Red flour beetle).